Consider the following 253-residue polypeptide: Non-homologous end joining protein Ku (253 aa).

The 184-residue stretch at Ile9–Ala192 folds into the Ku domain.

This sequence belongs to the prokaryotic Ku family. In terms of assembly, homodimer. Interacts with LigD.

With LigD forms a non-homologous end joining (NHEJ) DNA repair enzyme, which repairs dsDNA breaks with reduced fidelity. Binds linear dsDNA with 5'- and 3'- overhangs but not closed circular dsDNA nor ssDNA. Recruits and stimulates the ligase activity of LigD. This is Non-homologous end joining protein Ku from Archaeoglobus fulgidus (strain ATCC 49558 / DSM 4304 / JCM 9628 / NBRC 100126 / VC-16).